Reading from the N-terminus, the 257-residue chain is Imidazole glycerol phosphate synthase subunit HisF (257 aa).

Active-site residues include Asp12 and Asp131.

Belongs to the HisA/HisF family. As to quaternary structure, heterodimer of HisH and HisF.

The protein localises to the cytoplasm. It carries out the reaction 5-[(5-phospho-1-deoxy-D-ribulos-1-ylimino)methylamino]-1-(5-phospho-beta-D-ribosyl)imidazole-4-carboxamide + L-glutamine = D-erythro-1-(imidazol-4-yl)glycerol 3-phosphate + 5-amino-1-(5-phospho-beta-D-ribosyl)imidazole-4-carboxamide + L-glutamate + H(+). The protein operates within amino-acid biosynthesis; L-histidine biosynthesis; L-histidine from 5-phospho-alpha-D-ribose 1-diphosphate: step 5/9. Functionally, IGPS catalyzes the conversion of PRFAR and glutamine to IGP, AICAR and glutamate. The HisF subunit catalyzes the cyclization activity that produces IGP and AICAR from PRFAR using the ammonia provided by the HisH subunit. In Burkholderia multivorans (strain ATCC 17616 / 249), this protein is Imidazole glycerol phosphate synthase subunit HisF.